We begin with the raw amino-acid sequence, 213 residues long: MNIILLGPPGAGKGTQASRLIGKYAIPQISTGDMLRAALKEGTPLGLEAKKYMDQGALVPDSVVIGLVKERIQKPDCSKGYMLDGFPRNVSQAEALDMMLGELKQRIDGVVCIEVPNKELLGRLTGRRTCRSCGAGFHVMFDPPKTDGKCDKCGGELYQRDDDNEATVSSRLKVYEDQTKPLIDYYEKQGKLRRIDGVGSMDAIFGRITAILG.

10 to 15 (GAGKGT) provides a ligand contact to ATP. Residues 30–59 (STGDMLRAALKEGTPLGLEAKKYMDQGALV) are NMP. AMP-binding positions include Thr-31, Arg-36, 57 to 59 (ALV), 85 to 88 (GFPR), and Gln-92. Residues 126-163 (GRRTCRSCGAGFHVMFDPPKTDGKCDKCGGELYQRDDD) are LID. Arg-127 contacts ATP. The Zn(2+) site is built by Cys-130, Cys-133, Cys-150, and Cys-153. Residues Arg-160 and Arg-171 each coordinate AMP. Position 199 (Gly-199) interacts with ATP.

The protein belongs to the adenylate kinase family. Monomer.

It is found in the cytoplasm. It carries out the reaction AMP + ATP = 2 ADP. It functions in the pathway purine metabolism; AMP biosynthesis via salvage pathway; AMP from ADP: step 1/1. In terms of biological role, catalyzes the reversible transfer of the terminal phosphate group between ATP and AMP. Plays an important role in cellular energy homeostasis and in adenine nucleotide metabolism. This chain is Adenylate kinase, found in Syntrophobacter fumaroxidans (strain DSM 10017 / MPOB).